A 141-amino-acid polypeptide reads, in one-letter code: Granulocyte-macrophage colony-stimulating factor (141 aa).

The N-terminal stretch at 1-17 (MWLQNLLFLGIVVYSLS) is a signal peptide. Residue Ser-22 is glycosylated (O-linked (GalNAc...) serine). An O-linked (GalNAc...) threonine glycan is attached at Thr-27. Cystine bridges form between Cys-68-Cys-110 and Cys-102-Cys-135. Residues Asn-83 and Asn-92 are each glycosylated (N-linked (GlcNAc...) asparagine).

This sequence belongs to the GM-CSF family. Monomer. The signaling GM-CSF receptor complex is a dodecamer of two head-to-head hexamers of two alpha, two beta, and two ligand subunits.

It localises to the secreted. Its function is as follows. Cytokine that stimulates the growth and differentiation of hematopoietic precursor cells from various lineages, including granulocytes, macrophages, eosinophils and erythrocytes. The sequence is that of Granulocyte-macrophage colony-stimulating factor (Csf2) from Mus musculus (Mouse).